A 740-amino-acid polypeptide reads, in one-letter code: Zinc finger CCCH domain-containing protein 14 (740 aa).

Disordered stretches follow at residues 82 to 240, 254 to 314, 390 to 426, and 444 to 469; these read SNKQ…NIKG, VSAG…DDAV, ITPS…DDEE, and SFRD…HHST. Composition is skewed to basic and acidic residues over residues 87-158 and 176-185; these read ETSK…EIQR and EHVRARGEKH. A compositionally biased stretch (basic residues) spans 186-200; that stretch reads DRHHHKDHRRGRSHE. Residues 204 to 214 show a composition bias toward polar residues; sequence ITSTIVRQASA. Polar residues predominate over residues 393 to 409; sequence SRDSTPTDDSPTMQKWN. Residues 414–426 are compositionally biased toward acidic residues; that stretch reads IGDDSEESEDDEE. C3H1-type zinc fingers lie at residues 499-522 and 523-543; these read HVKE…MHPT and TNCK…IHPP. Residues 623–661 form a disordered region; the sequence is IKKKPAPGAESEKKEEKSDENESKAEEPKAEVAPVQPKP. Basic and acidic residues predominate over residues 632–652; the sequence is ESEKKEEKSDENESKAEEPKA. 3 C3H1-type zinc fingers span residues 668-691, 674-691, and 693-709; these read LHSM…KHPK, CRYA…KHPK, and CRFG…FYHK.

The protein belongs to the ZC3H14 family.

It localises to the nucleus. Its subcellular location is the cytoplasm. Its function is as follows. RNA-binding protein involved in the biogenesis of circular RNAs (circRNAs), which are produced by back-splicing circularization of pre-mRNAs. The protein is Zinc finger CCCH domain-containing protein 14 (sut-2) of Caenorhabditis elegans.